The chain runs to 423 residues: Immunity-related GTPase family M protein 3 (423 aa).

One can recognise an IRG-type G domain in the interval 83 to 260 (YRVKIAVTGD…PELRNTLQKD (178 aa)). Residues 92–99 (DSGNGMSS), 117–121 (TGVVR), and 200–202 (KLD) each bind GTP.

It belongs to the TRAFAC class dynamin-like GTPase superfamily. IRG family.

It localises to the endoplasmic reticulum. It is found in the cytoplasmic vesicle membrane. Its subcellular location is the lipid droplet. The enzyme catalyses GTP + H2O = GDP + phosphate + H(+). Immunity-related GTPase that plays important roles in host resistance to acute infection by protozoan, such as Toxoplasma gondii and Leishmania major. Acts as a dynamin-like protein that binds to intracellular membranes and promotes remodeling and trafficking of those membranes. Acts predominantly to restrict acute protozoan infection: expression is required in both hematopoietic and non-hematopoietic cellular compartments and is dependent on Stat1. Only plays a partial role in the control of latent Toxoplasma infection. Involved in the clearance of acute protozoan infections by regulating autophagy, possibly by promoting the fusion of phagosomes with lysosomes for efficient degradation of vacuoles containing parasites. Probably involved in membrane disruption of parasite-containing vacuoles. In addition to its role in resistance to acute infection by protozoan, also acts as a negative regulator of the integrated stress response (ISR) following coxsackievirus B3 infection. Promotes differentiation of activated CD8(+) T-cells. The protein is Immunity-related GTPase family M protein 3 of Mus musculus (Mouse).